A 177-amino-acid chain; its full sequence is MSDTEDNKNKQTTRRDFMVLTASSVAAIGAVCTLWPLVDSLNPSADVLALSSIEVDLSNIAVGQTVTVKWQGKPVFITNRTPDKIAEARAVKMSELIDPEADQARVKAGHDNWLVTIGICTHLGCVPLANQGEYDGWFCPCHGSQYDSSGRVRRGPAPLNLAVPPYTFISDKKIRIG.

A helical membrane pass occupies residues Met-18–Val-38. The Rieske domain occupies Ala-88–Arg-175. Residues Cys-120, His-122, Cys-139, and His-142 each contribute to the [2Fe-2S] cluster site. The cysteines at positions 125 and 141 are disulfide-linked.

This sequence belongs to the Rieske iron-sulfur protein family. In terms of assembly, the main subunits of complex b-c1 are: cytochrome b, cytochrome c1 and the Rieske protein. The cofactor is [2Fe-2S] cluster.

The protein localises to the cell membrane. The enzyme catalyses a quinol + 2 Fe(III)-[cytochrome c](out) = a quinone + 2 Fe(II)-[cytochrome c](out) + 2 H(+)(out). In terms of biological role, component of the ubiquinol-cytochrome c reductase complex (complex III or cytochrome b-c1 complex), which is a respiratory chain that generates an electrochemical potential coupled to ATP synthesis. The chain is Ubiquinol-cytochrome c reductase iron-sulfur subunit (petA) from Rickettsia conorii (strain ATCC VR-613 / Malish 7).